A 260-amino-acid polypeptide reads, in one-letter code: Ribonuclease PH (260 aa).

Phosphate is bound by residues arginine 88 and 126–128 (GTR).

This sequence belongs to the RNase PH family. In terms of assembly, homohexameric ring arranged as a trimer of dimers.

It carries out the reaction tRNA(n+1) + phosphate = tRNA(n) + a ribonucleoside 5'-diphosphate. Its function is as follows. Phosphorolytic 3'-5' exoribonuclease that plays an important role in tRNA 3'-end maturation. Removes nucleotide residues following the 3'-CCA terminus of tRNAs; can also add nucleotides to the ends of RNA molecules by using nucleoside diphosphates as substrates, but this may not be physiologically important. Probably plays a role in initiation of 16S rRNA degradation (leading to ribosome degradation) during starvation. This is Ribonuclease PH from Mycobacterium sp. (strain JLS).